A 3801-amino-acid polypeptide reads, in one-letter code: Lysosomal-trafficking regulator (3801 aa).

Residues 148-173 (KITHRYSVRDARKTQLSTSDSEANSD) are disordered. At serine 164 the chain carries Phosphoserine. Threonine 165 carries the post-translational modification Phosphothreonine. The residue at position 166 (serine 166) is a Phosphoserine. The stretch at 662–700 (ELSSSLSSPSYRFQGILPSSGSEDLLWKWDALKAYQNFV) is one WD 1 repeat. Residues 1181–1190 (AMTEKSHQSA) show a composition bias toward basic and acidic residues. Disordered regions lie at residues 1181-1203 (AMTE…FSEE) and 1221-1256 (YEAD…SPND). Residues 1221–1238 (YEADSESNPEDGETQDDG) show a composition bias toward acidic residues. Residues 1246 to 1256 (EGFSASSSPND) are compositionally biased toward polar residues. Serine 1509 and serine 1510 each carry phosphoserine. Residues 1582–1626 (SQENIFLPSKWQHLVLTYLQQPQGKRRIHGKISIWVSGQRKPDVT) form a WD 2 repeat. 5 positions are modified to phosphoserine: serine 2105, serine 2124, serine 2213, serine 2217, and serine 2264. The span at 2205–2215 (KQLGAEPRSED) shows a compositional bias: basic and acidic residues. Residues 2205-2224 (KQLGAEPRSEDDSPGDESCP) are disordered. Residues 3009 to 3115 (AASESIRVNR…VRDDVYHNIL (107 aa)) form the BEACH-type PH domain. Positions 3120-3422 (PNLLEYGNIT…QLFHMAHVSR (303 aa)) constitute a BEACH domain. WD repeat units lie at residues 3563–3602 (SQQY…STPS), 3614–3653 (GHTE…YVQS), 3656–3699 (GHKS…VGHV), 3700–3744 (HCRE…PVRE), and 3749–3788 (KSNK…RLKQ).

As to quaternary structure, interacts with CPAP, LIP8 and ZNF521. As to expression, abundantly expressed in adult and fetal thymus, peripheral blood leukocytes, bone marrow and several regions of the adult brain.

The protein resides in the cytoplasm. Its function is as follows. Adapter protein that regulates and/or fission of intracellular vesicles such as lysosomes. Might regulate trafficking of effectors involved in exocytosis. In cytotoxic T-cells and natural killer (NK) cells, has role in the regulation of size, number and exocytosis of lytic granules. In macrophages and dendritic cells, regulates phagosome maturation by controlling the conversion of early phagosomal compartments into late phagosomes. In macrophages and dendritic cells, specifically involved in TLR3- and TLR4-induced production of pro-inflammatory cytokines by regulating the endosomal TLR3- TICAM1/TRIF and TLR4- TICAM1/TRIF signaling pathways. The sequence is that of Lysosomal-trafficking regulator (LYST) from Homo sapiens (Human).